Reading from the N-terminus, the 116-residue chain is Immunoglobulin heavy variable 3-66 (116 aa).

The first 19 residues, 1-19 (MEFGLSWVFLVAILKGVQC), serve as a signal peptide directing secretion. Residues 20 to 44 (EVQLVESGGGLIQPGGSLRLSCAAS) form a framework-1 region. An Ig-like domain is found at 20 to 116 (EVQLVESGGG…EDTAVYYCAR (97 aa)). The cysteines at positions 41 and 114 are disulfide-linked. Residues 45-52 (GFTVSSNY) form a complementarity-determining-1 region. Positions 53–69 (MSWVRQAPGKGLEWVSV) are framework-2. Positions 70–76 (IYSCGST) are complementarity-determining-2. Positions 77–114 (YYADSVKGRFTISRDNSKNTLYLQMNSLRAEDTAVYYC) are framework-3. The interval 115-116 (AR) is complementarity-determining-3.

Immunoglobulins are composed of two identical heavy chains and two identical light chains; disulfide-linked.

The protein localises to the secreted. It localises to the cell membrane. Functionally, v region of the variable domain of immunoglobulin heavy chains that participates in the antigen recognition. Immunoglobulins, also known as antibodies, are membrane-bound or secreted glycoproteins produced by B lymphocytes. In the recognition phase of humoral immunity, the membrane-bound immunoglobulins serve as receptors which, upon binding of a specific antigen, trigger the clonal expansion and differentiation of B lymphocytes into immunoglobulins-secreting plasma cells. Secreted immunoglobulins mediate the effector phase of humoral immunity, which results in the elimination of bound antigens. The antigen binding site is formed by the variable domain of one heavy chain, together with that of its associated light chain. Thus, each immunoglobulin has two antigen binding sites with remarkable affinity for a particular antigen. The variable domains are assembled by a process called V-(D)-J rearrangement and can then be subjected to somatic hypermutations which, after exposure to antigen and selection, allow affinity maturation for a particular antigen. This Homo sapiens (Human) protein is Immunoglobulin heavy variable 3-66.